The primary structure comprises 349 residues: Twinfilin-2 (349 aa).

Ala2 carries the post-translational modification N-acetylalanine. ADF-H domains are found at residues 4-139 (QTGI…KHLS) and 177-313 (GLAF…DEVH). Lys14 is modified (N6-acetyllysine). Tyr309 is subject to Phosphotyrosine. A disordered region spans residues 322-349 (AFAKPKGPGGKRGHKRLIRGPGENGDDS). The span at 330–339 (GGKRGHKRLI) shows a compositional bias: basic residues. At Ser349 the chain carries Phosphoserine.

This sequence belongs to the actin-binding proteins ADF family. Twinfilin subfamily. In terms of assembly, interacts with G-actin; ADP-actin form and capping protein (CP). May also be able to interact with TWF1 and phosphoinositides, PI(4,5)P2. When bound to PI(4,5)P2, it is down-regulated. Interacts with MYO7A. In vitro, phosphorylated by PRKCZ, CK2 and SRC. As to expression, ubiquitously expressed (at protein level).

The protein resides in the cytoplasm. The protein localises to the cytoskeleton. Its subcellular location is the perinuclear region. It is found in the cell projection. It localises to the stereocilium. Actin-binding protein involved in motile and morphological processes. Inhibits actin polymerization, likely by sequestering G-actin. By capping the barbed ends of filaments, it also regulates motility. Seems to play an important role in clathrin-mediated endocytosis and distribution of endocytic organelles. May play a role in regulating the mature length of the middle and short rows of stereocilia. The polypeptide is Twinfilin-2 (TWF2) (Homo sapiens (Human)).